A 348-amino-acid chain; its full sequence is F-box protein At2g20380 (348 aa).

One can recognise an F-box domain in the interval 14 to 60 (SPESNSLPNDLIVTILARLSQSYYPKLSLVSKTFRAILASPELYQTR).

The polypeptide is F-box protein At2g20380 (Arabidopsis thaliana (Mouse-ear cress)).